A 346-amino-acid chain; its full sequence is Eukaryotic translation initiation factor 3 subunit I (346 aa).

5 WD repeats span residues 8–47 (GHERSLTQVKYNREGDLIFTSGKDNVASVWYAMNGERLGT), 50–89 (GHNGSIWSIDVDQHTEYAVTGSADFSVKVWRVRDGSIAHS), 150–189 (EGCAPVLVASWSYDGKYIVAGHQDGKISKYNGVTGECLEI), 192–233 (LHKQ…KTYE), and 289–328 (DHFGPVNYIAVSPQGTSYASGGEDGFVRLHHFDKSYFDFK).

Belongs to the eIF-3 subunit I family. Component of the eukaryotic translation initiation factor 3 (eIF-3) complex.

It localises to the cytoplasm. In terms of biological role, component of the eukaryotic translation initiation factor 3 (eIF-3) complex, which is involved in protein synthesis of a specialized repertoire of mRNAs and, together with other initiation factors, stimulates binding of mRNA and methionyl-tRNAi to the 40S ribosome. The eIF-3 complex specifically targets and initiates translation of a subset of mRNAs involved in cell proliferation. In Eremothecium gossypii (strain ATCC 10895 / CBS 109.51 / FGSC 9923 / NRRL Y-1056) (Yeast), this protein is Eukaryotic translation initiation factor 3 subunit I.